A 251-amino-acid chain; its full sequence is tRNA pseudouridine synthase A (251 aa).

The active-site Nucleophile is aspartate 53. Tyrosine 110 lines the substrate pocket.

It belongs to the tRNA pseudouridine synthase TruA family. As to quaternary structure, homodimer.

It carries out the reaction uridine(38/39/40) in tRNA = pseudouridine(38/39/40) in tRNA. In terms of biological role, formation of pseudouridine at positions 38, 39 and 40 in the anticodon stem and loop of transfer RNAs. This chain is tRNA pseudouridine synthase A, found in Mesoplasma florum (strain ATCC 33453 / NBRC 100688 / NCTC 11704 / L1) (Acholeplasma florum).